The sequence spans 175 residues: Orotate phosphoribosyltransferase (175 aa).

Residues R88, K89, K92, and 114 to 122 (EDVVTTARG) each bind 5-phospho-alpha-D-ribose 1-diphosphate. 2 residues coordinate orotate: T118 and R146.

The protein belongs to the purine/pyrimidine phosphoribosyltransferase family. PyrE subfamily. Homodimer. The cofactor is Mg(2+).

It catalyses the reaction orotidine 5'-phosphate + diphosphate = orotate + 5-phospho-alpha-D-ribose 1-diphosphate. Its pathway is pyrimidine metabolism; UMP biosynthesis via de novo pathway; UMP from orotate: step 1/2. In terms of biological role, catalyzes the transfer of a ribosyl phosphate group from 5-phosphoribose 1-diphosphate to orotate, leading to the formation of orotidine monophosphate (OMP). The sequence is that of Orotate phosphoribosyltransferase from Methanocella arvoryzae (strain DSM 22066 / NBRC 105507 / MRE50).